A 345-amino-acid polypeptide reads, in one-letter code: Biotin synthase (345 aa).

Residues 38–256 form the Radical SAM core domain; sequence GEVQVSTLLS…IAVARIMMPR (219 aa). 3 residues coordinate [4Fe-4S] cluster: Cys53, Cys57, and Cys60. The [2Fe-2S] cluster site is built by Cys97, Cys128, Cys188, and Arg260.

Belongs to the radical SAM superfamily. Biotin synthase family. In terms of assembly, homodimer. Requires [4Fe-4S] cluster as cofactor. [2Fe-2S] cluster is required as a cofactor.

It catalyses the reaction (4R,5S)-dethiobiotin + (sulfur carrier)-SH + 2 reduced [2Fe-2S]-[ferredoxin] + 2 S-adenosyl-L-methionine = (sulfur carrier)-H + biotin + 2 5'-deoxyadenosine + 2 L-methionine + 2 oxidized [2Fe-2S]-[ferredoxin]. It functions in the pathway cofactor biosynthesis; biotin biosynthesis; biotin from 7,8-diaminononanoate: step 2/2. In terms of biological role, catalyzes the conversion of dethiobiotin (DTB) to biotin by the insertion of a sulfur atom into dethiobiotin via a radical-based mechanism. This chain is Biotin synthase, found in Sodalis glossinidius (strain morsitans).